The chain runs to 226 residues: UPF0502 protein Gbem_0194 (226 aa).

It belongs to the UPF0502 family.

In Citrifermentans bemidjiense (strain ATCC BAA-1014 / DSM 16622 / JCM 12645 / Bem) (Geobacter bemidjiensis), this protein is UPF0502 protein Gbem_0194.